We begin with the raw amino-acid sequence, 379 residues long: Sialidase-2 (379 aa).

The FRIP motif signature appears at 20–23 (YRIP). Positions 21 and 41 each coordinate substrate. Aspartate 46 functions as the Proton acceptor in the catalytic mechanism. Residues 127-138 (VTSTDYGMNWSP) form a BNR 1 repeat. The substrate site is built by tyrosine 179 and tyrosine 181. The BNR 2 repeat unit spans residues 197–208 (FISLDHGHTWEL). Residues glutamate 218, arginine 237, and arginine 303 each coordinate substrate. The Nucleophile role is filled by tyrosine 333. The active site involves glutamate 354.

It belongs to the glycosyl hydrolase 33 family. Detected in skeletal muscle.

Its subcellular location is the cytoplasm. The protein resides in the cytosol. It carries out the reaction Hydrolysis of alpha-(2-&gt;3)-, alpha-(2-&gt;6)-, alpha-(2-&gt;8)- glycosidic linkages of terminal sialic acid residues in oligosaccharides, glycoproteins, glycolipids, colominic acid and synthetic substrates.. The enzyme catalyses a ganglioside GD1a + H2O = a ganglioside GM1 + N-acetylneuraminate. The catalysed reaction is a ganglioside GM1 + H2O = a ganglioside GA1 + N-acetylneuraminate. It catalyses the reaction a ganglioside GT1b + H2O = a ganglioside GD1b + N-acetylneuraminate. It carries out the reaction a ganglioside GD1b + H2O = a ganglioside GM1 + N-acetylneuraminate. The enzyme catalyses a ganglioside GD3 + H2O = a ganglioside GM3 + N-acetylneuraminate. The catalysed reaction is a ganglioside GM3 + H2O = a beta-D-galactosyl-(1-&gt;4)-beta-D-glucosyl-(1&lt;-&gt;1)-ceramide + N-acetylneuraminate. It catalyses the reaction a ganglioside GM2 + H2O = a ganglioside GA2 + N-acetylneuraminate. It carries out the reaction a neolactoside IV(3)-alpha-NeuAc-nLc4Cer(d18:1(4E)) + H2O = a neolactoside nLc4Cer(d18:1(4E)) + N-acetylneuraminate. The enzyme catalyses N-acetyl-alpha-neuraminosyl-(2-&gt;3)-beta-D-galactosyl-(1-&gt;4)-D-glucose + H2O = lactose + N-acetylneuraminate. Exo-alpha-sialidase that catalyzes the hydrolytic cleavage of the terminal sialic acid (N-acetylneuraminic acid, Neu5Ac) of a glycan moiety in the catabolism of glycolipids, glycoproteins and oligosacharides. Recognizes sialyl linkage positions of the glycan moiety as well as the supramolecular organization of the sialoglycoconjugate. Displays preference for alpha-(2-&gt;3)-sialylated GD1a and GT1B gangliosides over alpha-(2-&gt;8)-sialylated GD1b, in both monomeric forms and micelles. Hydrolyzes monomeric GM1 ganglioside, but has no activity toward the miscellar form. Has lower sialidase activity for glycoproteins such as fetuin and TF/transferrin that carry a mixture of alpha-(2-&gt;3) and alpha-(2-&gt;6)-sialyl linkages. Cleaves milk oligosaccharide alpha-(2-&gt;3)-sialyllactose, but is inactive toward alpha-(2-&gt;6)-sialyllactose isomer. Has no activity toward colominic acid, a homomer of alpha-(2-&gt;8)-linked Neu5Ac residues. This is Sialidase-2 (Neu2) from Rattus norvegicus (Rat).